The primary structure comprises 120 residues: MKKQRKNKINRARNLAMFLVFGGMLVMYGGLLLKQFEIIMVILMLVGFVMVLASTALYFLIGLTSTKAAVVTCPNCGKETKVLGRVDLCMHCDEPLTMDRNLEGKEFDEKYNKHSKRAPR.

2 helical membrane passes run 16 to 36 (AMFLVFGGMLVMYGGLLLKQF) and 41 to 61 (VILMLVGFVMVLASTALYFLI).

This sequence belongs to the UPF0295 family.

It localises to the cell membrane. This chain is UPF0295 protein Exig_0660, found in Exiguobacterium sibiricum (strain DSM 17290 / CCUG 55495 / CIP 109462 / JCM 13490 / 255-15).